The following is a 418-amino-acid chain: Bifunctional enzyme IspD/IspF (418 aa).

Positions 1–261 (MADTPALIPQ…EFKRASDMNF (261 aa)) are 2-C-methyl-D-erythritol 4-phosphate cytidylyltransferase. Residues 262–418 (RIGEGWDIHA…RATVLLRKFI (157 aa)) are 2-C-methyl-D-erythritol 2,4-cyclodiphosphate synthase. A divalent metal cation is bound by residues Asp-268 and His-270. Residues 268-270 (DIH) and 294-295 (HS) contribute to the 4-CDP-2-C-methyl-D-erythritol 2-phosphate site. His-302 is a binding site for a divalent metal cation. Residues 316–318 (DIG) and 321–325 (FPDTD) contribute to the 4-CDP-2-C-methyl-D-erythritol 2-phosphate site.

In the N-terminal section; belongs to the IspD/TarI cytidylyltransferase family. IspD subfamily. This sequence in the C-terminal section; belongs to the IspF family. A divalent metal cation serves as cofactor.

The enzyme catalyses 2-C-methyl-D-erythritol 4-phosphate + CTP + H(+) = 4-CDP-2-C-methyl-D-erythritol + diphosphate. The catalysed reaction is 4-CDP-2-C-methyl-D-erythritol 2-phosphate = 2-C-methyl-D-erythritol 2,4-cyclic diphosphate + CMP. It participates in isoprenoid biosynthesis; isopentenyl diphosphate biosynthesis via DXP pathway; isopentenyl diphosphate from 1-deoxy-D-xylulose 5-phosphate: step 2/6. It functions in the pathway isoprenoid biosynthesis; isopentenyl diphosphate biosynthesis via DXP pathway; isopentenyl diphosphate from 1-deoxy-D-xylulose 5-phosphate: step 4/6. Functionally, bifunctional enzyme that catalyzes the formation of 4-diphosphocytidyl-2-C-methyl-D-erythritol from CTP and 2-C-methyl-D-erythritol 4-phosphate (MEP) (IspD), and catalyzes the conversion of 4-diphosphocytidyl-2-C-methyl-D-erythritol 2-phosphate (CDP-ME2P) to 2-C-methyl-D-erythritol 2,4-cyclodiphosphate (ME-CPP) with a corresponding release of cytidine 5-monophosphate (CMP) (IspF). The chain is Bifunctional enzyme IspD/IspF from Albidiferax ferrireducens (strain ATCC BAA-621 / DSM 15236 / T118) (Rhodoferax ferrireducens).